The primary structure comprises 490 residues: Betaine aldehyde dehydrogenase (490 aa).

K(+) contacts are provided by S26, I27, and D93. 150 to 152 is a binding site for NAD(+); it reads GAW. The active-site Charge relay system is K162. 176 to 179 contributes to the NAD(+) binding site; it reads KPSE. V180 is a K(+) binding site. NAD(+) is bound at residue 230–233; it reads GTVT. L246 provides a ligand contact to K(+). E252 (proton acceptor) is an active-site residue. NAD(+) contacts are provided by G254, C286, and E387. C286 acts as the Nucleophile in catalysis. Cysteine sulfenic acid (-SOH) is present on C286. 2 residues coordinate K(+): K457 and G460. The active-site Charge relay system is the E464.

The protein belongs to the aldehyde dehydrogenase family. In terms of assembly, dimer of dimers. It depends on K(+) as a cofactor.

It carries out the reaction betaine aldehyde + NAD(+) + H2O = glycine betaine + NADH + 2 H(+). It functions in the pathway amine and polyamine biosynthesis; betaine biosynthesis via choline pathway; betaine from betaine aldehyde: step 1/1. Its function is as follows. Involved in the biosynthesis of the osmoprotectant glycine betaine. Catalyzes the irreversible oxidation of betaine aldehyde to the corresponding acid. The protein is Betaine aldehyde dehydrogenase of Ectopseudomonas mendocina (strain ymp) (Pseudomonas mendocina).